Reading from the N-terminus, the 218-residue chain is Large ribosomal subunit protein uL3 (218 aa).

Belongs to the universal ribosomal protein uL3 family. In terms of assembly, part of the 50S ribosomal subunit. Forms a cluster with proteins L14 and L19.

One of the primary rRNA binding proteins, it binds directly near the 3'-end of the 23S rRNA, where it nucleates assembly of the 50S subunit. The chain is Large ribosomal subunit protein uL3 from Mycolicibacterium gilvum (strain PYR-GCK) (Mycobacterium gilvum (strain PYR-GCK)).